Consider the following 607-residue polypeptide: Autophagy-related protein 16-1 (607 aa).

The tract at residues 13–43 is interaction with ATG5; that stretch reads WKRHISEQLRRRDRLQRQAFEEIILQYNKLL. A coiled-coil region spans residues 79-230; sequence DSQLQEMAQL…QKELAEAAKE (152 aa). S139 is modified (phosphoserine). The WIPI2-binding stretch occupies residues 207–230; it reads AENEKDSRRRQARLQKELAEAAKE. The RB1CC1-binding stretch occupies residues 230–242; the sequence is EPLPVEQDDDIEV. Phosphoserine occurs at positions 269 and 287. Residues 296 to 299 carry the Caspase cleavage motif; the sequence is DNVD. 7 WD repeats span residues 320–359, 364–403, 406–445, 447–484, 486–525, 532–573, and 575–607; these read AHDG…CEFK, GSNA…LRHT, GHSG…CIKT, FAGS…IVRE, ELLG…IKQT, KCGS…KVLS, and QHSS…WAQY.

Belongs to the WD repeat ATG16 family. In terms of assembly, homodimer. Homooligomer. Heterooligomer with ATG16L2. Interacts with WIPI1. Interacts with WIPI2. Interacts with RB1CC1; the interaction is required for ULK1 complex-dependent autophagy. Interacts with ATG5. Part of the minor complex composed of 4 sets of ATG12-ATG5 and ATG16L1 (400 kDa); this complex interacts with ATG3 leading to disruption of ATG7 interaction and promotion of ATG8-like proteins lipidation. Part of the major complex composed of 8 sets of ATG12-ATG5 and ATG16L1 (800 kDa). Interacts with RAB33B (GTP- and GDP-bound forms); the complex consists of a tetramer where two RAB33B molecules bind independently one molecule of the ATG16L1 homodimer; the interaction promotes ATG12-ATG5-ATG16L1 complex recruitment to phagophores. Interacts (via WD repeats) with TMEM59; the interaction mediates unconventional autophagic activity of TMEM59. Interacts with TLR2. Interacts (via WD repeats) with MEFV. Interacts with PPP1CA; the interaction dephosphorylates ATG16L1 causing dissociation of ATG12-ATG5-ATG16L1 complex. Interacts (via N-terminal) with CLTC. Interacts with NOD1. Interacts with NOD2. Interacts with TUFM. Interacts with TRIM16. Interacts (via WD repeats) with SPATA33. Interacts with IRGM. Post-translationally, proteolytic cleavage by activated CASP3 leads to degradation and may regulate autophagy upon cellular stress and apoptotic stimuli. Phosphorylation at Ser-139 promotes association with the ATG12-ATG5 conjugate to form the ATG12-ATG5-ATG16L1 complex.

It is found in the cytoplasm. Its subcellular location is the preautophagosomal structure membrane. The protein resides in the endosome membrane. The protein localises to the lysosome membrane. Functionally, plays an essential role in both canonical and non-canonical autophagy: interacts with ATG12-ATG5 to mediate the lipidation to ATG8 family proteins (MAP1LC3A, MAP1LC3B, MAP1LC3C, GABARAPL1, GABARAPL2 and GABARAP). Acts as a molecular hub, coordinating autophagy pathways via distinct domains that support either canonical or non-canonical signaling. During canonical autophagy, interacts with ATG12-ATG5 to mediate the conjugation of phosphatidylethanolamine (PE) to ATG8 proteins, to produce a membrane-bound activated form of ATG8. Thereby, controls the elongation of the nascent autophagosomal membrane. As part of the ATG8 conjugation system with ATG5 and ATG12, required for recruitment of LRRK2 to stressed lysosomes and induction of LRRK2 kinase activity in response to lysosomal stress. Also involved in non-canonical autophagy, a parallel pathway involving conjugation of ATG8 proteins to single membranes at endolysosomal compartments, probably by catalyzing conjugation of phosphatidylserine (PS) to ATG8. Non-canonical autophagy plays a key role in epithelial cells to limit lethal infection by influenza A (IAV) virus. Regulates mitochondrial antiviral signaling (MAVS)-dependent type I interferon (IFN-I) production. Negatively regulates NOD1- and NOD2-driven inflammatory cytokine response. Instead, promotes an autophagy-dependent antibacterial pathway together with NOD1 or NOD2. Plays a role in regulating morphology and function of Paneth cell. In Pongo abelii (Sumatran orangutan), this protein is Autophagy-related protein 16-1.